The chain runs to 953 residues: GATA zinc finger domain-containing protein 14 (953 aa).

A compositionally biased stretch (polar residues) spans 1 to 21 (MFEKIPNQNSHSMGDNNTGYY). Disordered regions lie at residues 1–109 (MFEK…SPNR) and 216–756 (TYGS…TQPQ). The segment covering 22-89 (NNNNNNNNNN…QLPSPQLSQP (68 aa)) has biased composition (low complexity). Polar residues predominate over residues 90–109 (NSMNTTPNQTSPNLRSSPNR). 3 stretches are compositionally biased toward low complexity: residues 219–330 (SSNT…VNAN), 342–683 (NIYN…PNSS), and 690–756 (GNNG…TQPQ). The GATA-type zinc finger occupies 893 to 918 (CTSCGTTQTPEWRKGPAGGKSLCNAC). Residues 934–953 (KVETTSSPPSTSMNVVNLLN) form a disordered region.

This is GATA zinc finger domain-containing protein 14 (gtaN) from Dictyostelium discoideum (Social amoeba).